The following is a 137-amino-acid chain: Small ribosomal subunit protein uS12 (137 aa).

2 disordered regions span residues 1 to 21 (MPTI…KSDS) and 33 to 57 (KVQT…TPKK).

The protein belongs to the universal ribosomal protein uS12 family. As to quaternary structure, part of the 30S ribosomal subunit. Contacts proteins S8 and S17. May interact with IF1 in the 30S initiation complex.

Functionally, with S4 and S5 plays an important role in translational accuracy. Interacts with and stabilizes bases of the 16S rRNA that are involved in tRNA selection in the A site and with the mRNA backbone. Located at the interface of the 30S and 50S subunits, it traverses the body of the 30S subunit contacting proteins on the other side and probably holding the rRNA structure together. The combined cluster of proteins S8, S12 and S17 appears to hold together the shoulder and platform of the 30S subunit. The sequence is that of Small ribosomal subunit protein uS12 from Streptococcus pyogenes serotype M1.